The following is a 125-amino-acid chain: uncharacterized protein (125 aa).

This is an uncharacterized protein from Mycoplasma (Bacteriophage L2).